Consider the following 197-residue polypeptide: Ribonuclease HII (197 aa).

The RNase H type-2 domain occupies 11–197; sequence HLIAGVDEVG…FAPVKKILGL (187 aa). Residues aspartate 17, glutamate 18, and aspartate 109 each contribute to the a divalent metal cation site.

It belongs to the RNase HII family. Mn(2+) serves as cofactor. It depends on Mg(2+) as a cofactor.

The protein localises to the cytoplasm. It catalyses the reaction Endonucleolytic cleavage to 5'-phosphomonoester.. Endonuclease that specifically degrades the RNA of RNA-DNA hybrids. In Actinobacillus pleuropneumoniae serotype 5b (strain L20), this protein is Ribonuclease HII.